Here is a 490-residue protein sequence, read N- to C-terminus: Cytochrome P450 2C12, female-specific (490 aa).

Cys-435 provides a ligand contact to heme.

The protein belongs to the cytochrome P450 family. Requires heme as cofactor.

The protein localises to the endoplasmic reticulum membrane. It localises to the microsome membrane. The enzyme catalyses an organic molecule + reduced [NADPH--hemoprotein reductase] + O2 = an alcohol + oxidized [NADPH--hemoprotein reductase] + H2O + H(+). This P450 is active in 15-beta-hydroxylation of steroid sulfates. This is Cytochrome P450 2C12, female-specific (Cyp2c12) from Rattus norvegicus (Rat).